The primary structure comprises 229 residues: Enolase-phosphatase E1 (229 aa).

Residues 206–229 (DRDPASHHPQVQRFDDIHPEQIPA) are disordered. Basic and acidic residues predominate over residues 218–229 (RFDDIHPEQIPA).

Belongs to the HAD-like hydrolase superfamily. MasA/MtnC family. In terms of assembly, monomer. Mg(2+) serves as cofactor.

It carries out the reaction 5-methylsulfanyl-2,3-dioxopentyl phosphate + H2O = 1,2-dihydroxy-5-(methylsulfanyl)pent-1-en-3-one + phosphate. It participates in amino-acid biosynthesis; L-methionine biosynthesis via salvage pathway; L-methionine from S-methyl-5-thio-alpha-D-ribose 1-phosphate: step 3/6. Its pathway is amino-acid biosynthesis; L-methionine biosynthesis via salvage pathway; L-methionine from S-methyl-5-thio-alpha-D-ribose 1-phosphate: step 4/6. In terms of biological role, bifunctional enzyme that catalyzes the enolization of 2,3-diketo-5-methylthiopentyl-1-phosphate (DK-MTP-1-P) into the intermediate 2-hydroxy-3-keto-5-methylthiopentenyl-1-phosphate (HK-MTPenyl-1-P), which is then dephosphorylated to form the acireductone 1,2-dihydroxy-3-keto-5-methylthiopentene (DHK-MTPene). This Klebsiella oxytoca protein is Enolase-phosphatase E1.